We begin with the raw amino-acid sequence, 475 residues long: Glycogen synthase (475 aa).

Residue Lys15 participates in ADP-alpha-D-glucose binding.

Belongs to the glycosyltransferase 1 family. Bacterial/plant glycogen synthase subfamily.

The enzyme catalyses [(1-&gt;4)-alpha-D-glucosyl](n) + ADP-alpha-D-glucose = [(1-&gt;4)-alpha-D-glucosyl](n+1) + ADP + H(+). It functions in the pathway glycan biosynthesis; glycogen biosynthesis. In terms of biological role, synthesizes alpha-1,4-glucan chains using ADP-glucose. This chain is Glycogen synthase, found in Chlamydia abortus (strain DSM 27085 / S26/3) (Chlamydophila abortus).